The sequence spans 334 residues: Succinylglutamate desuccinylase (334 aa).

3 residues coordinate Zn(2+): His-59, Glu-62, and His-151. Residue Glu-215 is part of the active site.

The protein belongs to the AspA/AstE family. Succinylglutamate desuccinylase subfamily. The cofactor is Zn(2+).

The catalysed reaction is N-succinyl-L-glutamate + H2O = L-glutamate + succinate. It functions in the pathway amino-acid degradation; L-arginine degradation via AST pathway; L-glutamate and succinate from L-arginine: step 5/5. In terms of biological role, transforms N(2)-succinylglutamate into succinate and glutamate. This chain is Succinylglutamate desuccinylase, found in Pseudomonas fluorescens (strain SBW25).